The following is a 426-amino-acid chain: Protein arginine N-methyltransferase 2 (426 aa).

Disordered regions lie at residues 65 to 88 and 155 to 175; these read DEEE…GQES and DEEM…AVAA. The span at 73-88 shows a compositional bias: polar residues; sequence NGVQTNGDRQTHGQES. Over residues 155–168 the composition is skewed to acidic residues; sequence DEEMEEDGEQEQEQ. The region spanning 207–426 is the RMT2 domain; it reads PSVTSSRYLN…YRLPLCKYMD (220 aa). Residues Tyr214, Met243, 263–268, 284–286, 311–312, and Asp331 contribute to the S-adenosyl-L-methionine site; these read HGMGIV, EAH, and WQ.

Belongs to the class I-like SAM-binding methyltransferase superfamily. RMT2 methyltransferase family. In terms of assembly, monomer.

Its subcellular location is the cytoplasm. It is found in the nucleus. In terms of biological role, S-adenosyl-L-methionine-dependent protein-arginine N-methyltransferase that methylates the delta-nitrogen atom of arginine residues to form N5-methylarginine (type IV) in target proteins. Monomethylates ribosomal protein L12. In Emericella nidulans (strain FGSC A4 / ATCC 38163 / CBS 112.46 / NRRL 194 / M139) (Aspergillus nidulans), this protein is Protein arginine N-methyltransferase 2.